The following is a 329-amino-acid chain: L-lactate dehydrogenase (329 aa).

Residues Val18, Glu39, Lys46, Tyr71, and 85-86 (GA) contribute to the NAD(+) site. 2 residues coordinate substrate: Gln88 and Arg94. NAD(+)-binding positions include Ser107, 124–126 (AAN), and Ser149. 126–129 (NPVD) provides a ligand contact to substrate. 154–157 (DSAR) lines the substrate pocket. Residues Arg159 and His174 each contribute to the beta-D-fructose 1,6-bisphosphate site. His181 functions as the Proton acceptor in the catalytic mechanism. A Phosphotyrosine modification is found at Tyr226. Residue Thr235 participates in substrate binding.

The protein belongs to the LDH/MDH superfamily. LDH family. As to quaternary structure, homotetramer.

It localises to the cytoplasm. It catalyses the reaction (S)-lactate + NAD(+) = pyruvate + NADH + H(+). Its pathway is fermentation; pyruvate fermentation to lactate; (S)-lactate from pyruvate: step 1/1. With respect to regulation, allosterically activated by fructose 1,6-bisphosphate (FBP). In terms of biological role, catalyzes the conversion of lactate to pyruvate. In Streptococcus agalactiae serotype V (strain ATCC BAA-611 / 2603 V/R), this protein is L-lactate dehydrogenase.